A 164-amino-acid chain; its full sequence is uncharacterized protein (164 aa).

The RDD domain occupies 26-158; sequence YAGFWVRFWA…DYIADTTVVH (133 aa). 2 consecutive transmembrane segments (helical) span residues 35-55 and 66-86; these read AFLL…SPLF and MFTF…YFAL.

Its subcellular location is the cell membrane. This is an uncharacterized protein from Bacillus subtilis (strain 168).